Consider the following 456-residue polypeptide: ATP synthase subunit beta 1 (456 aa).

152 to 159 (GGAGVGKS) is a binding site for ATP.

The protein belongs to the ATPase alpha/beta chains family. F-type ATPases have 2 components, CF(1) - the catalytic core - and CF(0) - the membrane proton channel. CF(1) has five subunits: alpha(3), beta(3), gamma(1), delta(1), epsilon(1). CF(0) has three main subunits: a(1), b(2) and c(9-12). The alpha and beta chains form an alternating ring which encloses part of the gamma chain. CF(1) is attached to CF(0) by a central stalk formed by the gamma and epsilon chains, while a peripheral stalk is formed by the delta and b chains.

The protein resides in the cell membrane. It carries out the reaction ATP + H2O + 4 H(+)(in) = ADP + phosphate + 5 H(+)(out). Produces ATP from ADP in the presence of a proton gradient across the membrane. The catalytic sites are hosted primarily by the beta subunits. This Listeria welshimeri serovar 6b (strain ATCC 35897 / DSM 20650 / CCUG 15529 / CIP 8149 / NCTC 11857 / SLCC 5334 / V8) protein is ATP synthase subunit beta 1.